The following is a 410-amino-acid chain: Na(+)/H(+) antiporter NhaA 1/4 (410 aa).

Helical transmembrane passes span V16 to L36, L55 to V75, A95 to F115, G125 to V145, F156 to C176, S178 to L198, A215 to V235, I275 to F295, A299 to G319, I340 to L360, and A371 to G391.

The protein belongs to the NhaA Na(+)/H(+) (TC 2.A.33) antiporter family.

It localises to the cell membrane. It catalyses the reaction Na(+)(in) + 2 H(+)(out) = Na(+)(out) + 2 H(+)(in). Na(+)/H(+) antiporter that extrudes sodium in exchange for external protons. The protein is Na(+)/H(+) antiporter NhaA 1/4 of Streptomyces coelicolor (strain ATCC BAA-471 / A3(2) / M145).